The following is a 317-amino-acid chain: Protein phosphatase 1 regulatory subunit 3C-B (317 aa).

A CBM21 domain is found at 150-258 (RNRLKKNLVC…NNDGKNYKLV (109 aa)).

In terms of assembly, interacts with PPP1CC catalytic subunit of PP1 and associates with glycogen. Forms complexes with glycogen phosphorylase, glycogen synthase and phosphorylase kinase which is necessary for its regulation of PP1 activity.

Its function is as follows. Acts as a glycogen-targeting subunit for PP1 and regulates its activity. Activates glycogen synthase, reduces glycogen phosphorylase activity and limits glycogen breakdown. In Danio rerio (Zebrafish), this protein is Protein phosphatase 1 regulatory subunit 3C-B (ppp1r3cb).